Reading from the N-terminus, the 527-residue chain is MSEPGEEPVAAPAGPAPDPVLNELYGSERPAVELLPGVPLSPIVNSCWLPADAKAMLAESWIPVPPEDAGEEAGPPPPAFEAAAPEYNELVRRLAKTAPFRKWNELTIQAKQLEQEVAGLKGPDAEAKQAELENVKVQIADAEAAVAEVKQSFSDDPLSLTGWMQALTDLADGGMTTFEVSGQGWPYCSLRQLFGEMPSAAPPAGFFDGVERVLGTFKRRYEKERGPGSVQLMLKLAPNVFSDAWSTGGAPAAVAAVEAYVERARANVFGPDGGVTPEGVPEPLDLVQLVWWDFAAADPLPVLKALQRMATDQLQVDEDSGEVSVSEPKKIRGIGLVDFPADRLKAAIQAGVPITCVQVEHSVLVRSAQPVLDLCAKYGIKVLARGGTLGGLLSAKYLGAPPPDPVRGDADLDSVPGCLDAVNNVGGWARLQAALAVIKGIADKHGVKPETVALRWQIDAGCFPLVTTRWSSRVWRQFGYEGWSSFEVSGGRPGVDGPLFQVESFLDVEDVRALAGLAAVHLGPKAG.

The disordered stretch occupies residues 1–22 (MSEPGEEPVAAPAGPAPDPVLN). A coiled-coil region spans residues 101-153 (RKWNELTIQAKQLEQEVAGLKGPDAEAKQAELENVKVQIADAEAAVAEVKQSF). Arginine 191 and arginine 366 each carry asymmetric dimethylarginine.

The protein belongs to the aldo/keto reductase family. Asymmetrically dimethylated at Arg-191 and Arg-366 during flagellum resorption. Probably methylated by PRMT1.

The protein localises to the cytoplasm. It localises to the cytoskeleton. It is found in the flagellum axoneme. Functionally, flagellar radial spokes contribute to the regulation of dynein arm activity and thus the pattern of flagellar bending. They consist of a thin stalk, which is attached to the a subfiber of the outer doublet microtubule, and a bulbous head, which is attached to the stalk and appears to interact with the projections from the central pair of microtubules. The polypeptide is Flagellar radial spoke protein 5 (Chlamydomonas reinhardtii (Chlamydomonas smithii)).